The sequence spans 20 residues: Transcriptional regulatory protein PufK (20 aa).

The segment covering 1 to 11 (MVPYRNPRHQH) has biased composition (basic residues). The tract at residues 1-20 (MVPYRNPRHQHVASVLRSGG) is disordered.

Its function is as follows. Involved in the transcriptional regulation of pufB. This Cereibacter sphaeroides (strain ATCC 17023 / DSM 158 / JCM 6121 / CCUG 31486 / LMG 2827 / NBRC 12203 / NCIMB 8253 / ATH 2.4.1.) (Rhodobacter sphaeroides) protein is Transcriptional regulatory protein PufK (pufK).